The following is a 401-amino-acid chain: Mu-type opioid receptor (401 aa).

Over 1 to 69 the chain is Extracellular; it reads MDSGAVPTNA…CPSAGSPSMI (69 aa). 5 N-linked (GlcNAc...) asparagine glycosylation sites follow: asparagine 9, asparagine 12, asparagine 34, asparagine 41, and asparagine 49. Residues 70-94 traverse the membrane as a helical segment; it reads TAIIIMALYSIVCVVGLFGNFLVMY. Over 95-107 the chain is Cytoplasmic; the sequence is VIVRYTKMKTATN. The chain crosses the membrane as a helical span at residues 108–132; sequence IYIFNLALADALATSTLPFQSVNYL. Topologically, residues 133 to 143 are extracellular; that stretch reads MGTWPFGTILC. A disulfide bridge links cysteine 143 with cysteine 220. A helical transmembrane segment spans residues 144–166; the sequence is KIVISIDYYNMFTSIFTLCTMSV. The Cytoplasmic portion of the chain corresponds to 167–186; it reads DRYIAVCHPVKALDLRTPRN. A Phosphotyrosine modification is found at tyrosine 169. A helical transmembrane segment spans residues 187 to 208; that stretch reads AKIINICNWILSSAIGLPVMFM. Residues 209 to 231 are Extracellular-facing; the sequence is ATTKYRQGSIDCTLTFSHPTWYW. A helical transmembrane segment spans residues 232-256; sequence ENLLKICVFIFAFIMPILIITVCYG. The Cytoplasmic segment spans residues 257–280; the sequence is LMILRLKSVRMLSGSKEKDRNLRR. A helical transmembrane segment spans residues 281 to 307; it reads ITRMVLVVVAVFIVCWTPIHIYVIIKA. The Extracellular portion of the chain corresponds to 308 to 315; sequence LITIPETT. The chain crosses the membrane as a helical span at residues 316-339; it reads FQTVSWHFCIALGYTNSCLNPVLY. The NPxxY; plays a role in stabilizing the activated conformation of the receptor signature appears at 335 to 339; it reads NPVLY. Topologically, residues 340 to 401 are cytoplasmic; sequence AFLDENFKRC…NLEAETTPLP (62 aa). Cysteine 354 carries S-palmitoyl cysteine lipidation. Residues 365–389 are disordered; that stretch reads NSTRIRQNTRDHPSTANTVDRTNHQ. Position 366 is a phosphoserine (serine 366). Threonine 373 is subject to Phosphothreonine. Serine 378 bears the Phosphoserine mark. A Phosphothreonine modification is found at threonine 397.

The protein belongs to the G-protein coupled receptor 1 family. As to quaternary structure, forms homooligomers and heterooligomers with other GPCRs, such as OPRD1, OPRK1, OPRL1, NPFFR2, ADRA2A, SSTR2, CNR1 and CCR5 (probably in dimeric forms). Interacts with heterotrimeric G proteins; interaction with a heterotrimeric complex containing GNAI1, GNB1 and GNG2 stabilizes the active conformation of the receptor and increases its affinity for endomorphin-2, the synthetic opioid peptide DAMGO and for morphinan agonists. Interacts with PPL; the interaction disrupts agonist-mediated G-protein activation. Interacts (via C-terminus) with DNAJB4 (via C-terminus). Interacts with calmodulin; the interaction inhibits the constitutive activity of OPRM1; it abolishes basal and attenuates agonist-stimulated G-protein coupling. Interacts with FLNA, PLD2, RANBP9 and WLS and GPM6A. Interacts with RTP4. Interacts with SYP and GNAS. Interacts with RGS9, RGS17, RGS20, RGS4, PPP1R9B and HINT1. In terms of processing, phosphorylated. Differentially phosphorylated in basal and agonist-induced conditions. Agonist-mediated phosphorylation modulates receptor internalization. Phosphorylated by GRK2 in a agonist-dependent manner. Phosphorylation at Tyr-169 requires receptor activation, is dependent on non-receptor protein tyrosine kinase Src and results in a decrease in agonist efficacy by reducing G-protein coupling efficiency. Phosphorylated on tyrosine residues; the phosphorylation is involved in agonist-induced G-protein-independent receptor down-regulation. Phosphorylation at Ser-378 is involved in G-protein-dependent but not beta-arrestin-dependent activation of the ERK pathway. Ubiquitinated. A basal ubiquitination seems not to be related to degradation. Ubiquitination is increased upon formation of OPRM1:OPRD1 oligomers leading to proteasomal degradation; the ubiquitination is diminished by RTP4.

It is found in the cell membrane. Its subcellular location is the cell projection. It localises to the axon. The protein resides in the perikaryon. The protein localises to the dendrite. It is found in the endosome. In terms of biological role, receptor for endogenous opioids such as beta-endorphin and endomorphin. Receptor for natural and synthetic opioids including morphine, heroin, DAMGO, fentanyl, etorphine, buprenorphin and methadone. Also activated by enkephalin peptides, such as Met-enkephalin or Met-enkephalin-Arg-Phe, with higher affinity for Met-enkephalin-Arg-Phe. Agonist binding to the receptor induces coupling to an inactive GDP-bound heterotrimeric G-protein complex and subsequent exchange of GDP for GTP in the G-protein alpha subunit leading to dissociation of the G-protein complex with the free GTP-bound G-protein alpha and the G-protein beta-gamma dimer activating downstream cellular effectors. The agonist- and cell type-specific activity is predominantly coupled to pertussis toxin-sensitive G(i) and G(o) G alpha proteins, GNAI1, GNAI2, GNAI3 and GNAO1, and to a lesser extent to pertussis toxin-insensitive G alpha proteins GNAZ and GNA15. They mediate an array of downstream cellular responses, including inhibition of adenylate cyclase activity and both N-type and L-type calcium channels, activation of inward rectifying potassium channels, mitogen-activated protein kinase (MAPK), phospholipase C (PLC), phosphoinositide/protein kinase (PKC), phosphoinositide 3-kinase (PI3K) and regulation of NF-kappa-B. Also couples to adenylate cyclase stimulatory G alpha proteins. The selective temporal coupling to G-proteins and subsequent signaling can be regulated by RGSZ proteins, such as RGS9, RGS17 and RGS4. Phosphorylation by members of the GPRK subfamily of Ser/Thr protein kinases and association with beta-arrestins is involved in short-term receptor desensitization. Beta-arrestins associate with the GPRK-phosphorylated receptor and uncouple it from the G-protein thus terminating signal transduction. The phosphorylated receptor is internalized through endocytosis via clathrin-coated pits which involves beta-arrestins. The activation of the ERK pathway occurs either in a G-protein-dependent or a beta-arrestin-dependent manner and is regulated by agonist-specific receptor phosphorylation. Acts as a class A G-protein coupled receptor (GPCR) which dissociates from beta-arrestin at or near the plasma membrane and undergoes rapid recycling. Receptor down-regulation pathways are varying with the agonist and occur dependent or independent of G-protein coupling. Endogenous ligands induce rapid desensitization, endocytosis and recycling. Heterooligomerization with other GPCRs can modulate agonist binding, signaling and trafficking properties. Involved in neurogenesis. The polypeptide is Mu-type opioid receptor (OPRM1) (Bos taurus (Bovine)).